The primary structure comprises 659 residues: DNA ligase (659 aa).

NAD(+) is bound by residues aspartate 32 to aspartate 36, serine 81 to leucine 82, and glutamate 110. Lysine 112 acts as the N6-AMP-lysine intermediate in catalysis. NAD(+) is bound by residues arginine 133, glutamate 168, lysine 284, and lysine 308. Zn(2+) contacts are provided by cysteine 402, cysteine 405, cysteine 420, and cysteine 425. In terms of domain architecture, BRCT spans alanine 582–proline 659.

It belongs to the NAD-dependent DNA ligase family. LigA subfamily. The cofactor is Mg(2+). It depends on Mn(2+) as a cofactor.

It carries out the reaction NAD(+) + (deoxyribonucleotide)n-3'-hydroxyl + 5'-phospho-(deoxyribonucleotide)m = (deoxyribonucleotide)n+m + AMP + beta-nicotinamide D-nucleotide.. Its function is as follows. DNA ligase that catalyzes the formation of phosphodiester linkages between 5'-phosphoryl and 3'-hydroxyl groups in double-stranded DNA using NAD as a coenzyme and as the energy source for the reaction. It is essential for DNA replication and repair of damaged DNA. In Desulfitobacterium hafniense (strain DSM 10664 / DCB-2), this protein is DNA ligase.